The chain runs to 121 residues: uncharacterized protein (121 aa).

2 disordered regions span residues 38 to 76 and 91 to 121; these read NQMA…KYQQ and SVLR…KQEN. Positions 43–63 are enriched in basic residues; that stretch reads KRNKQSKKPKQTSKGVKKSSK. The segment covering 64–76 has biased composition (low complexity); sequence QNKNSSKNNKYQQ.

This is an uncharacterized protein from Schizosaccharomyces pombe (strain 972 / ATCC 24843) (Fission yeast).